Consider the following 595-residue polypeptide: Glutamyl-tRNA(Gln) amidotransferase subunit B, mitochondrial (595 aa).

The N-terminal 114 residues, 1-114 (MPRLWYSRYL…RAPTSTVAEP (114 aa)), are a transit peptide targeting the mitochondrion. Residues 59-78 (KEEAKRSKSQSRNGRGKKQV) are disordered.

The protein belongs to the GatB/GatE family. GatB subfamily. Subunit of the heterotrimeric GatCAB amidotransferase (AdT) complex, composed of A, B and C subunits.

The protein resides in the mitochondrion. The enzyme catalyses L-glutamyl-tRNA(Gln) + L-glutamine + ATP + H2O = L-glutaminyl-tRNA(Gln) + L-glutamate + ADP + phosphate + H(+). Allows the formation of correctly charged Gln-tRNA(Gln) through the transamidation of misacylated Glu-tRNA(Gln) in the mitochondria. The reaction takes place in the presence of glutamine and ATP through an activated gamma-phospho-Glu-tRNA(Gln). The protein is Glutamyl-tRNA(Gln) amidotransferase subunit B, mitochondrial of Talaromyces stipitatus (strain ATCC 10500 / CBS 375.48 / QM 6759 / NRRL 1006) (Penicillium stipitatum).